Here is a 396-residue protein sequence, read N- to C-terminus: Subtilisin-like protease 5 (396 aa).

The N-terminal stretch at methionine 1–alanine 20 is a signal peptide. The propeptide occupies alanine 21 to histidine 116. In terms of domain architecture, Inhibitor I9 spans tyrosine 37 to isoleucine 113. The 272-residue stretch at proline 125–arginine 396 folds into the Peptidase S8 domain. Active-site charge relay system residues include aspartate 156 and histidine 187. N-linked (GlcNAc...) asparagine glycosylation is found at asparagine 230 and asparagine 248. Residue serine 342 is the Charge relay system of the active site. The segment covering proline 376 to leucine 389 has biased composition (polar residues). The tract at residues proline 376–arginine 396 is disordered. A glycan (N-linked (GlcNAc...) asparagine) is linked at asparagine 392.

The protein belongs to the peptidase S8 family.

It localises to the secreted. In terms of biological role, secreted subtilisin-like serine protease with keratinolytic activity that contributes to pathogenicity. The chain is Subtilisin-like protease 5 (SUB5) from Arthroderma benhamiae (strain ATCC MYA-4681 / CBS 112371) (Trichophyton mentagrophytes).